The primary structure comprises 95 residues: Co-chaperonin GroES (95 aa).

The protein belongs to the GroES chaperonin family. Heptamer of 7 subunits arranged in a ring. Interacts with the chaperonin GroEL.

It is found in the cytoplasm. Functionally, together with the chaperonin GroEL, plays an essential role in assisting protein folding. The GroEL-GroES system forms a nano-cage that allows encapsulation of the non-native substrate proteins and provides a physical environment optimized to promote and accelerate protein folding. GroES binds to the apical surface of the GroEL ring, thereby capping the opening of the GroEL channel. In Nitratidesulfovibrio vulgaris (strain ATCC 29579 / DSM 644 / CCUG 34227 / NCIMB 8303 / VKM B-1760 / Hildenborough) (Desulfovibrio vulgaris), this protein is Co-chaperonin GroES.